The primary structure comprises 319 residues: Acyl-coenzyme A thioesterase 8 (319 aa).

The tract at residues 1–20 is disordered; sequence MSSPQAPEDGQGCGDRGDPP. Active-site charge relay system residues include Asp-232, Ser-254, and Gln-304. The Microbody targeting signal motif lies at 317–319; it reads SKL.

This sequence belongs to the C/M/P thioester hydrolase family. Homodimer. In terms of assembly, (Microbial infection) Interacts with human immunodeficiency virus (HIV-1) Nef (via middle region); this interaction enhances ACOT8 Acyl-CoA thioesterase activity and occurs in a Nef myristoylation-independent manner. According to a second report, the interaction with HIV-1 Nef occurs in a Nef myristoylation-independent manner but does not enhance ACOT8 Acyl-CoA thioesterase activity. Detected in a T-cell line (at protein level). Ubiquitous.

It is found in the peroxisome matrix. The catalysed reaction is choloyl-CoA + H2O = cholate + CoA + H(+). It carries out the reaction chenodeoxycholoyl-CoA + H2O = chenodeoxycholate + CoA + H(+). The enzyme catalyses acetyl-CoA + H2O = acetate + CoA + H(+). It catalyses the reaction butanoyl-CoA + H2O = butanoate + CoA + H(+). The catalysed reaction is 2-methylpropanoyl-CoA + H2O = 2-methylpropanoate + CoA + H(+). It carries out the reaction hexanoyl-CoA + H2O = hexanoate + CoA + H(+). The enzyme catalyses octanoyl-CoA + H2O = octanoate + CoA + H(+). It catalyses the reaction decanoyl-CoA + H2O = decanoate + CoA + H(+). The catalysed reaction is dodecanoyl-CoA + H2O = dodecanoate + CoA + H(+). It carries out the reaction tetradecanoyl-CoA + H2O = tetradecanoate + CoA + H(+). The enzyme catalyses hexadecanoyl-CoA + H2O = hexadecanoate + CoA + H(+). It catalyses the reaction octadecanoyl-CoA + H2O = octadecanoate + CoA + H(+). The catalysed reaction is malonyl-CoA + H2O = malonate + CoA + H(+). It carries out the reaction acetoacetyl-CoA + H2O = acetoacetate + CoA + H(+). The enzyme catalyses propanoyl-CoA + H2O = propanoate + CoA + H(+). It catalyses the reaction succinyl-CoA + H2O = succinate + CoA + H(+). The catalysed reaction is glutaryl-CoA + H2O = glutarate + CoA + H(+). It carries out the reaction hexanedioyl-CoA + H2O = hexanedioate + CoA + H(+). The enzyme catalyses octanedioyl-CoA + H2O = octanedioate + CoA + H(+). It catalyses the reaction decanedioyl-CoA + H2O = decanedioate + CoA + H(+). The catalysed reaction is dodecanedioyl-CoA + H2O = dodecanedioate + CoA + H(+). It carries out the reaction (9Z)-tetradecenoyl-CoA + H2O = (9Z)-tetradecenoate + CoA + H(+). The enzyme catalyses (9Z)-hexadecenoyl-CoA + H2O = (9Z)-hexadecenoate + CoA + H(+). It catalyses the reaction (9Z)-octadecenoyl-CoA + H2O = (9Z)-octadecenoate + CoA + H(+). The catalysed reaction is (9Z,12Z)-octadecadienoyl-CoA + H2O = (9Z,12Z)-octadecadienoate + CoA + H(+). It carries out the reaction eicosanoyl-CoA + H2O = eicosanoate + CoA + H(+). The enzyme catalyses (5Z,8Z,11Z,14Z)-eicosatetraenoyl-CoA + H2O = (5Z,8Z,11Z,14Z)-eicosatetraenoate + CoA + H(+). It catalyses the reaction 4,8-dimethylnonanoyl-CoA + H2O = 4,8-dimethylnonanoate + CoA + H(+). The catalysed reaction is 2,6-dimethylheptanoyl-CoA + H2O = 2,6-dimethylheptanoate + CoA + H(+). It carries out the reaction (3S)-3-hydroxy-3-methylglutaryl-CoA + H2O = 3-hydroxy-3-methylglutarate + CoA + H(+). The enzyme catalyses 3alpha,7alpha,12alpha-trihydroxy-5beta-cholestan-26-oyl-CoA + H2O = 3alpha,7alpha,12alpha-trihydroxy-5beta-cholestan-26-oate + CoA + H(+). It catalyses the reaction 2-methyloctadecanoyl-CoA + H2O = 2-methyloctadecanoate + CoA + H(+). The catalysed reaction is prostaglandin F2alpha-CoA + H2O = prostaglandin F2alpha + CoA + H(+). Its pathway is lipid metabolism; fatty acid metabolism. Its activity is regulated as follows. Inhibited by CoASH (IC(50)=10-15 uM). Also inhibited by cysteine-reactive agents. In terms of biological role, catalyzes the hydrolysis of acyl-CoAs into free fatty acids and coenzyme A (CoASH), regulating their respective intracellular levels. Displays no strong substrate specificity with respect to the carboxylic acid moiety of Acyl-CoAs. Hydrolyzes medium length (C2 to C20) straight-chain, saturated and unsaturated acyl-CoAS but is inactive towards substrates with longer aliphatic chains. Moreover, it catalyzes the hydrolysis of CoA esters of bile acids, such as choloyl-CoA and chenodeoxycholoyl-CoA and competes with bile acid CoA:amino acid N-acyltransferase (BAAT). Is also able to hydrolyze CoA esters of dicarboxylic acids. It is involved in the metabolic regulation of peroxisome proliferation. (Microbial infection) May mediate Nef-induced down-regulation of CD4 cell-surface expression. The protein is Acyl-coenzyme A thioesterase 8 (ACOT8) of Homo sapiens (Human).